The sequence spans 203 residues: Proteasome subunit beta 2 (203 aa).

The propeptide at 1–9 (MGEEVSIGA) is removed in mature form; by autocatalysis. Catalysis depends on T10, which acts as the Nucleophile.

Belongs to the peptidase T1B family. As to quaternary structure, the 20S proteasome core is composed of 14 alpha and 14 beta subunits that assemble into four stacked heptameric rings, resulting in a barrel-shaped structure. The two inner rings, each composed of seven catalytic beta subunits, are sandwiched by two outer rings, each composed of seven alpha subunits. The catalytic chamber with the active sites is on the inside of the barrel. Has a gated structure, the ends of the cylinder being occluded by the N-termini of the alpha-subunits. Is capped at one or both ends by the proteasome regulatory ATPase, PAN.

The protein localises to the cytoplasm. The enzyme catalyses Cleavage of peptide bonds with very broad specificity.. The formation of the proteasomal ATPase PAN-20S proteasome complex, via the docking of the C-termini of PAN into the intersubunit pockets in the alpha-rings, triggers opening of the gate for substrate entry. Interconversion between the open-gate and close-gate conformations leads to a dynamic regulation of the 20S proteasome proteolysis activity. In terms of biological role, component of the proteasome core, a large protease complex with broad specificity involved in protein degradation. The chain is Proteasome subunit beta 2 from Pyrobaculum calidifontis (strain DSM 21063 / JCM 11548 / VA1).